Here is a 211-residue protein sequence, read N- to C-terminus: MNESETLLQFYTWSIFLMSYLIGSIPFGLLFTRLAKLGDVRAIGSGNIGATNVLRTGNKKVATLTLLCDILKGTVVVLVIKFLNDPIENSIIISLVGFFAFLGHLFPIWLKFKGGKGVATYLGVCLGYYWPAAIVFIIVWIMFFILTRYSSLSALIAVIITPIFVYFSYPHLYAHCILVMMSIFVIIKHHANIARLLIGKESKIGTQNRDK.

Helical transmembrane passes span F10–L30, T63–L83, S90–L110, L126–L146, L152–L172, and A174–A194.

Belongs to the PlsY family. In terms of assembly, probably interacts with PlsX.

The protein resides in the cell inner membrane. It carries out the reaction an acyl phosphate + sn-glycerol 3-phosphate = a 1-acyl-sn-glycero-3-phosphate + phosphate. Its pathway is lipid metabolism; phospholipid metabolism. Catalyzes the transfer of an acyl group from acyl-phosphate (acyl-PO(4)) to glycerol-3-phosphate (G3P) to form lysophosphatidic acid (LPA). This enzyme utilizes acyl-phosphate as fatty acyl donor, but not acyl-CoA or acyl-ACP. This chain is Glycerol-3-phosphate acyltransferase, found in Bartonella quintana (strain Toulouse) (Rochalimaea quintana).